Reading from the N-terminus, the 146-residue chain is Superoxide dismutase [Mn] 2 (146 aa).

Residues H42, D126, and H130 each contribute to the Mn(2+) site.

It belongs to the iron/manganese superoxide dismutase family. Requires Mn(2+) as cofactor.

It catalyses the reaction 2 superoxide + 2 H(+) = H2O2 + O2. Destroys superoxide anion radicals which are normally produced within the cells and which are toxic to biological systems. The polypeptide is Superoxide dismutase [Mn] 2 (sod2) (Haloferax mediterranei (Halobacterium mediterranei)).